The chain runs to 243 residues: Pyridoxine 5'-phosphate synthase (243 aa).

Asn9 provides a ligand contact to 3-amino-2-oxopropyl phosphate. 11-12 (DH) is a binding site for 1-deoxy-D-xylulose 5-phosphate. Arg20 is a 3-amino-2-oxopropyl phosphate binding site. His45 acts as the Proton acceptor in catalysis. 1-deoxy-D-xylulose 5-phosphate contacts are provided by Arg47 and His52. The Proton acceptor role is filled by Glu72. Thr102 provides a ligand contact to 1-deoxy-D-xylulose 5-phosphate. His193 (proton donor) is an active-site residue. 3-amino-2-oxopropyl phosphate is bound by residues Gly194 and 215–216 (GH).

This sequence belongs to the PNP synthase family. In terms of assembly, homooctamer; tetramer of dimers.

It localises to the cytoplasm. The enzyme catalyses 3-amino-2-oxopropyl phosphate + 1-deoxy-D-xylulose 5-phosphate = pyridoxine 5'-phosphate + phosphate + 2 H2O + H(+). The protein operates within cofactor biosynthesis; pyridoxine 5'-phosphate biosynthesis; pyridoxine 5'-phosphate from D-erythrose 4-phosphate: step 5/5. Its function is as follows. Catalyzes the complicated ring closure reaction between the two acyclic compounds 1-deoxy-D-xylulose-5-phosphate (DXP) and 3-amino-2-oxopropyl phosphate (1-amino-acetone-3-phosphate or AAP) to form pyridoxine 5'-phosphate (PNP) and inorganic phosphate. The polypeptide is Pyridoxine 5'-phosphate synthase (Shigella sonnei (strain Ss046)).